Reading from the N-terminus, the 501-residue chain is Lysine--tRNA ligase (501 aa).

Mg(2+) contacts are provided by Glu406 and Glu413.

It belongs to the class-II aminoacyl-tRNA synthetase family. In terms of assembly, homodimer. Requires Mg(2+) as cofactor.

The protein resides in the cytoplasm. The enzyme catalyses tRNA(Lys) + L-lysine + ATP = L-lysyl-tRNA(Lys) + AMP + diphosphate. The sequence is that of Lysine--tRNA ligase (lysS) from Halalkalibacterium halodurans (strain ATCC BAA-125 / DSM 18197 / FERM 7344 / JCM 9153 / C-125) (Bacillus halodurans).